Reading from the N-terminus, the 280-residue chain is Ribosomal RNA small subunit methyltransferase A (280 aa).

S-adenosyl-L-methionine is bound by residues Asn28, Leu30, Gly55, Glu77, Asp103, and Asn122.

It belongs to the class I-like SAM-binding methyltransferase superfamily. rRNA adenine N(6)-methyltransferase family. RsmA subfamily.

The protein localises to the cytoplasm. The catalysed reaction is adenosine(1518)/adenosine(1519) in 16S rRNA + 4 S-adenosyl-L-methionine = N(6)-dimethyladenosine(1518)/N(6)-dimethyladenosine(1519) in 16S rRNA + 4 S-adenosyl-L-homocysteine + 4 H(+). Its function is as follows. Specifically dimethylates two adjacent adenosines (A1518 and A1519) in the loop of a conserved hairpin near the 3'-end of 16S rRNA in the 30S particle. May play a critical role in biogenesis of 30S subunits. The chain is Ribosomal RNA small subunit methyltransferase A from Ruegeria sp. (strain TM1040) (Silicibacter sp.).